Consider the following 336-residue polypeptide: Iron-uptake system permease protein FeuC (336 aa).

9 helical membrane passes run Leu7 to Val27, Val57 to Ile77, Pro85 to Phe105, Met120 to Trp140, Ile150 to Leu170, Ala191 to Ile211, Val246 to Ala266, Tyr280 to Gly300, and Glu308 to Phe328.

Belongs to the binding-protein-dependent transport system permease family. FecCD subfamily. In terms of assembly, the complex is composed of one ATP-binding protein (YusV), two transmembrane proteins (FeuB and FeuC) and a solute-binding protein (FeuA).

The protein resides in the cell membrane. Involved in the uptake of iron. Probably responsible for the translocation of the substrate across the membrane. Its function is as follows. Part of the ABC transporter complex FeuABC/YusV involved in import of the catecholate siderophores bacillibactin and enterobactin. The protein is Iron-uptake system permease protein FeuC (feuC) of Bacillus subtilis (strain 168).